Here is a 601-residue protein sequence, read N- to C-terminus: Elongation factor 4 (601 aa).

Residues 7-189 enclose the tr-type G domain; the sequence is SHIRNFSIIA…SIVQLVPPPQ (183 aa). GTP-binding positions include 19–24 and 136–139; these read DHGKST and NKID.

The protein belongs to the TRAFAC class translation factor GTPase superfamily. Classic translation factor GTPase family. LepA subfamily.

The protein localises to the cell inner membrane. The catalysed reaction is GTP + H2O = GDP + phosphate + H(+). In terms of biological role, required for accurate and efficient protein synthesis under certain stress conditions. May act as a fidelity factor of the translation reaction, by catalyzing a one-codon backward translocation of tRNAs on improperly translocated ribosomes. Back-translocation proceeds from a post-translocation (POST) complex to a pre-translocation (PRE) complex, thus giving elongation factor G a second chance to translocate the tRNAs correctly. Binds to ribosomes in a GTP-dependent manner. This chain is Elongation factor 4, found in Trichodesmium erythraeum (strain IMS101).